A 180-amino-acid chain; its full sequence is Cytokinin-beta-glucosidase 3 (180 aa).

Hydrolyzes cytokinin glucosides thus liberating free cytokinins. This Panax ginseng (Korean ginseng) protein is Cytokinin-beta-glucosidase 3 (ROLC3).